Reading from the N-terminus, the 1404-residue chain is DNA-directed RNA polymerase subunit beta' (1404 aa).

Cysteine 70, cysteine 72, cysteine 85, and cysteine 88 together coordinate Zn(2+). 3 residues coordinate Mg(2+): aspartate 460, aspartate 462, and aspartate 464. Zn(2+) contacts are provided by cysteine 825, cysteine 899, cysteine 906, and cysteine 909.

The protein belongs to the RNA polymerase beta' chain family. As to quaternary structure, the RNAP catalytic core consists of 2 alpha, 1 beta, 1 beta' and 1 omega subunit. When a sigma factor is associated with the core the holoenzyme is formed, which can initiate transcription. Mg(2+) is required as a cofactor. Zn(2+) serves as cofactor.

The enzyme catalyses RNA(n) + a ribonucleoside 5'-triphosphate = RNA(n+1) + diphosphate. Functionally, DNA-dependent RNA polymerase catalyzes the transcription of DNA into RNA using the four ribonucleoside triphosphates as substrates. The polypeptide is DNA-directed RNA polymerase subunit beta' (Nitrosomonas europaea (strain ATCC 19718 / CIP 103999 / KCTC 2705 / NBRC 14298)).